The sequence spans 263 residues: Zinc finger protein STAMENLESS 1 (263 aa).

Residues 1–51 (MNSSRRQEGSPLDLNNLPDEFGKQTVESSTTTAASSAEASRVTKKKSNGGK) form a disordered region. Residues 25 to 40 (TVESSTTTAASSAEAS) show a composition bias toward low complexity. The segment at 58–80 (YECRFCSLKFCKSQALGGHMNRH) adopts a C2H2-type zinc-finger fold.

As to expression, expressed in leaf primordia, inflorescence meristem, rachis branch meristems, floral meristem and floral organ primordia.

It is found in the nucleus. Regulates floral organ identity and cell proliferation in the inner floral whorls. Probably specifies the identities of lodicule and stamen through positive regulation of MADS16 expression. May contribute to morphogenesis by suppressing OSH1 expression in the lateral organs. This is Zinc finger protein STAMENLESS 1 (SL1) from Oryza sativa subsp. japonica (Rice).